Here is a 168-residue protein sequence, read N- to C-terminus: Thermonuclease (168 aa).

Residues 1–27 form the signal peptide; it reads MKKITTGVLILAIAIVVLIFQYINGDG. Residues R64, E72, and R114 contribute to the active site.

Belongs to the thermonuclease family. It depends on Ca(2+) as a cofactor.

The protein localises to the secreted. The catalysed reaction is Endonucleolytic cleavage to nucleoside 3'-phosphates and 3'-phosphooligonucleotide end-products.. Functionally, enzyme that catalyzes the hydrolysis of both DNA and RNA at the 5'-position of the phosphodiester bond. The protein is Thermonuclease (nucI) of Staphylococcus intermedius.